Here is a 1293-residue protein sequence, read N- to C-terminus: Enterobactin synthase component F (1293 aa).

Residues 1–301 are elongation/condensation; it reads MSQHLPLVAA…NVLPLGIHIA (301 aa). Positions 482–887 are adenylation; the sequence is SYREMREQVV…ALPDVEQAVT (406 aa). A Carrier domain is found at 971-1046; the sequence is APKAGSETII…KLATIIDGEE (76 aa). Ser-1006 is modified (O-(pantetheine 4'-phosphoryl)serine). The thioesterase stretch occupies residues 1066 to 1293; it reads PTLFCFHPAS…GPIIRATLNR (228 aa). Catalysis depends on His-1271, which acts as the Proton acceptor; for thioesterase activity.

The protein belongs to the ATP-dependent AMP-binding enzyme family. EntF subfamily. Proteins EntB, EntD, EntE and EntF are the component of the enterobactin synthase. Components probably do not form a stable complex. EntF acts as a catalytic monomer. Pantetheine 4'-phosphate serves as cofactor. Post-translationally, 4'-phosphopantetheine is transferred from CoA to a specific serine of apo-EntF by EntD. Holo-EntF so formed is then acylated with seryl-AMP.

Its subcellular location is the cytoplasm. The catalysed reaction is 3 2,3-dihydroxybenzoate + 3 L-serine + 6 ATP = enterobactin + 6 AMP + 6 diphosphate + 4 H(+). It catalyses the reaction holo-[peptidyl-carrier protein] + L-serine + ATP = L-seryl-[peptidyl-carrier protein] + AMP + diphosphate. It participates in siderophore biosynthesis; enterobactin biosynthesis. Functionally, involved in the biosynthesis of the siderophore enterobactin (enterochelin), which is a macrocyclic trimeric lactone of N-(2,3-dihydroxybenzoyl)-serine. EntF catalyzes the activation of L-serine via ATP-dependent PPi exchange reaction to form seryladenylate. Activated L-serine is loaded onto the peptidyl carrier domain via a thioester linkage to the phosphopanthetheine moiety, forming seryl-S-Ppant-EntF. EntF acts then as the sole catalyst for the formation of the three amide and three ester linkages found in enterobactin, using seryladenylate and 2,3-dihydroxybenzoate-S-Ppant-EntB (DHB-S-Ppant-EntB) as substrates, via the formation of a DHB-Ser-S-Ppant-EntF intermediate. The sequence is that of Enterobactin synthase component F (entF) from Escherichia coli O157:H7.